The following is a 670-amino-acid chain: Thrombospondin-type laminin G domain and EAR repeat-containing protein (670 aa).

The first 20 residues, 1 to 20, serve as a signal peptide directing secretion; that stretch reads MSALLMLCAVLLLLGTPSRG. One can recognise a Laminin G-like domain in the interval 59–278; the sequence is GLQFSATEPR…KVTLGSRPPC (220 aa). EAR repeat units follow at residues 314–359, 361–409, 413–461, 465–513, 515–571, 575–623, and 626–669; these read DYVE…KWTD, KFVS…KWSP, KFTL…RWNP, LFEA…IWLV, AFQL…ELNI, TFVK…RWQG, and GFVA…KLRT. N498 is a glycosylation site (N-linked (GlcNAc...) asparagine).

As to expression, in the organ of Corti, expression at postnatal day 1 (P1) is restricted to the basal region of the stereocilia of inner and outer hair cells (at protein level). Expressed in the organ of Corti at P1 and P7, in cochlear ganglion, stria vascularis and vestibular ends at P7, and in inferior colliculus, remaining brainstem, cerebellum, brain hemispheres and retina at P1, P7 and in the adult. Also detected in adult liver, lung, kidney, intestine and testis but not in heart or skeletal muscle.

The protein resides in the secreted. It is found in the cell surface. It localises to the cell projection. Its subcellular location is the stereocilium. Functionally, plays a critical role in tooth and hair follicle morphogenesis through regulation of the Notch signaling pathway. May play a role in development or function of the auditory system. The chain is Thrombospondin-type laminin G domain and EAR repeat-containing protein from Mus musculus (Mouse).